The chain runs to 994 residues: Valine--tRNA ligase (994 aa).

The short motif at 43-53 (PNVTGTLHMGH) is the 'HIGH' region element. Residues 329–345 (QSGMPSGATSDTTNTPS) are compositionally biased toward polar residues. A disordered region spans residues 329-355 (QSGMPSGATSDTTNTPSDPEASSAANQ). Residues 585-589 (KMSKS) carry the 'KMSKS' region motif. Lys588 contributes to the ATP binding site. Residues 692-714 (AHSPAQHQAGQDGQDAPRTPQPR) form a disordered region. The span at 696 to 707 (AQHQAGQDGQDA) shows a compositional bias: low complexity. A coiled-coil region spans residues 928–994 (LIDVDAERVR…NGLRERRATL (67 aa)).

The protein belongs to the class-I aminoacyl-tRNA synthetase family. ValS type 1 subfamily. As to quaternary structure, monomer.

It localises to the cytoplasm. The enzyme catalyses tRNA(Val) + L-valine + ATP = L-valyl-tRNA(Val) + AMP + diphosphate. Catalyzes the attachment of valine to tRNA(Val). As ValRS can inadvertently accommodate and process structurally similar amino acids such as threonine, to avoid such errors, it has a 'posttransfer' editing activity that hydrolyzes mischarged Thr-tRNA(Val) in a tRNA-dependent manner. The sequence is that of Valine--tRNA ligase from Xylella fastidiosa (strain 9a5c).